The chain runs to 212 residues: Cytidylate kinase (212 aa).

7–15 (GPAASGKGT) provides a ligand contact to ATP.

This sequence belongs to the cytidylate kinase family. Type 1 subfamily.

Its subcellular location is the cytoplasm. It carries out the reaction CMP + ATP = CDP + ADP. The enzyme catalyses dCMP + ATP = dCDP + ADP. The protein is Cytidylate kinase of Nitrobacter winogradskyi (strain ATCC 25391 / DSM 10237 / CIP 104748 / NCIMB 11846 / Nb-255).